Consider the following 612-residue polypeptide: MENVKHIILVLSGKGGVGKSSVTTQLALSLHETPFYSRKLRIGVLDIDLTGPSIPRMFGMDAETHRIHQSSSGWVPVYTDETKEIGLMSLAFLLSSKNDSVVWRGPKKAAMIRQFVSDVNWGDIDYLLIDTPPGTSDEHLTIVESLLSVTSERPQLIDGAVMVTTPQNVATLDVKKEINFCQNLKIPILGVVENMSGFVCPHCSDCTNIFSKGGGEQLSNTYHLPFLGAVPIDPKFGELIESQSTEHPLIEHYKQLEVAKLFQKITQNMLDSLFHSPSLVLDKVLSGHRGRIWSVAVHPTLPLVATASEDKSVRVFQAQTGELIHVIDGYHTRSVRRVAWRPIDRPVLAIASFDATVSIYEKIDDDWECVAALEGHENEVKCVAWSHDGVYLATCSRDKSVWIWEAMEDDEFDCLAVLQEHTQDVKVVAWHPKDDLLVSGSYDNTIRFWRDDGDDWVQTCELTSHTSTVWALNFSPDGRLLASGDGEGEVFIWEKLVSNEDAARTPSTNILRPSLEEEWCLKAVLPRTFTEPVYTLGWKDDHTLCASGAEGTIGLFAYEDDVSTWHTVSLKEKAHDVYEINTIAWTNDSRLLSGGDDGLCNVWKLSEADQTA.

13-20 (GKGGVGKS) serves as a coordination point for ATP. Positions 200 and 203 each coordinate [4Fe-4S] cluster. WD repeat units follow at residues 287–326 (GHRG…LIHV), 330–370 (YHTR…WECV), 375–414 (GHEN…EFDC), 420–459 (EHTQ…WVQT), 464–503 (SHTS…EDAA), 528–566 (TFTE…STWH), and 574–612 (AHDV…DQTA).

This sequence in the N-terminal section; belongs to the Mrp/NBP35 ATP-binding proteins family. NUBP2/CFD1 subfamily. In the C-terminal section; belongs to the WD repeat CIA1 family. As to quaternary structure, heterotetramer of 2 nbp35 and 2 SJAG_02895 chains. The cofactor is [4Fe-4S] cluster.

It localises to the cytoplasm. The protein localises to the nucleus. Fusion protein of two essential components of the cytosolic iron-sulfur (Fe/S) protein assembly (CIA) machinery. Required for maturation of extramitochondrial Fe-S proteins. May form a heterotetramer with nubp35, functioning as a Fe-S scaffold complex, mediating the de novo assembly of an Fe-S cluster and its transfer to target apoproteins. The polypeptide is Probable cytosolic Fe-S cluster assembly factor SJAG_02895 (Schizosaccharomyces japonicus (strain yFS275 / FY16936) (Fission yeast)).